The following is a 278-amino-acid chain: BPI fold-containing family A member 1 (278 aa).

The N-terminal stretch at 1-19 (MFLVGSLVVLCGLLAHSTA) is a signal peptide. Repeat repeat units lie at residues 23–28 (GLPLPL), 30–36 (QGPPLPL), 39–44 (GPPLPL), and 47–52 (GQLLPL). Residues 23-52 (GLPLPLGQGPPLPLNQGPPLPLNQGQLLPL) are 4 X 6 AA repeats of G-[LPQ]-[PL]-L-P-L. The segment at 112-117 (LVGGLL) is important for surfactant activity and antibacterial properties. N-linked (GlcNAc...) asparagine glycans are attached at residues Asn182 and Asn228. A disulfide bond links Cys204 and Cys246.

The protein belongs to the BPI/LBP/Plunc superfamily. Plunc family. As to quaternary structure, monomer. Interacts (via N-terminus) with SCNN1B, a subunit of the heterotrimeric epithelial sodium channel (ENaC); this inhibits proteolytic activation of ENaC. As to expression, detected in airway epithelia (trachea and lung) and in bronchoalveolar fluid (at protein level). Upper airways, nasopharyngeal epithelium and thymus. Highest expression in the trachea and progressive decrease from proximal (bronchial) to distal (bronchiolar) airways. No expression is detected in the terminal bronchioles, respiratory bronchioles or lung alveoli.

It localises to the secreted. In terms of biological role, lipid-binding protein which shows high specificity for the surfactant phospholipid dipalmitoylphosphatidylcholine (DPPC). Plays a role in the innate immune responses of the upper airways. Reduces the surface tension in secretions from airway epithelia and inhibits the formation of biofilm by pathogenic Gram-negative bacteria, such as P.aeruginosa and K.pneumoniae. Negatively regulates proteolytic cleavage of SCNN1G, an event that is required for activation of the epithelial sodium channel (ENaC), and thereby contributes to airway surface liquid homeostasis and proper clearance of mucus. Plays a role in the airway inflammatory response after exposure to irritants. May attract macrophages and neutrophils. This chain is BPI fold-containing family A member 1 (Bpifa1), found in Mus musculus (Mouse).